The following is a 240-amino-acid chain: Inhibitor of growth protein 5 (240 aa).

An N6-acetyllysine modification is found at Lys-114. Residues 116–165 (EGSDFESSGGRGLKKGRGQKEKRGSRGRGRRTSEEDTPKKKKHKGGSEFT) are disordered. Ser-118 is subject to Phosphoserine. Arg-126 carries the post-translational modification Omega-N-methylarginine. The PHD-type zinc-finger motif lies at 186-235 (PTYCLCHQVSYGEMIGCDNPDCPIEWFHFACVDLTTKPKGKWFCPRCVQE). Zn(2+) contacts are provided by Cys-189, Cys-191, Cys-202, Cys-207, His-213, Cys-216, Cys-229, and Cys-232.

The protein belongs to the ING family. As to quaternary structure, component of the HBO1 complex composed of KAT7/HBO1, MEAF6, ING5, and one scaffold subunit: complexes containing BRPF scaffold (BRPF1, BRD1/BRPF2 or BRPF3) direct KAT7/HBO1 specificity towards H3K14ac, while complexes containing JADE scaffold (JADE1, JADE2 and JADE3) mediate acetylation of histone H4. Component of the MOZ/MORF complex composed at least of ING5, KAT6A, KAT6B, MEAF6 and one of BRPF1, BRD1/BRPF2 and BRPF3. Interacts with H3K4me3 and to a lesser extent with H3K4me2. Interacts with EP300 and p53/TP53. Interacts with INCA1. In terms of tissue distribution, down-regulated in bone marrow cells in acute myeloid leukemia patients as compared with normal bone marrow cells.

The protein localises to the nucleus. It is found in the chromosome. In terms of biological role, component of the HBO1 complex, which specifically mediates acetylation of histone H3 at 'Lys-14' (H3K14ac) and, to a lower extent, acetylation of histone H4. Component of the MOZ/MORF complex which has a histone H3 acetyltransferase activity. Through chromatin acetylation it may regulate DNA replication and may function as a transcriptional coactivator. Inhibits cell growth, induces a delay in S-phase progression and enhances Fas-induced apoptosis in an INCA1-dependent manner. This chain is Inhibitor of growth protein 5 (ING5), found in Homo sapiens (Human).